We begin with the raw amino-acid sequence, 269 residues long: 4-hydroxy-4-methyl-2-oxoglutarate aldolase cghB (269 aa).

Residue H48 is the Proton acceptor of the active site. 2 residues coordinate a divalent metal cation: E155 and D181. Residue D181 coordinates substrate.

This sequence belongs to the HpcH/HpaI aldolase family. In terms of assembly, homohexamer; trimer of dimers. Co(2+) serves as cofactor. Requires Mn(2+) as cofactor. Zn(2+) is required as a cofactor. It depends on Fe(2+) as a cofactor. The cofactor is Mg(2+).

The catalysed reaction is 4-hydroxy-4-methyl-2-oxoglutarate = 2 pyruvate. It functions in the pathway secondary metabolite biosynthesis. In terms of biological role, 4-hydroxy-4-methyl-2-oxoglutarate aldolase; part of the gene cluster that mediates the biosynthesis of the tetramic acid Sch210972, a potential anti-HIV fungal natural product that contains a decalin core. The PKS module of cghG together with the enoylreductase cghC catalyze the formation of the polyketide unit which is then conjugated to 4-hydroxyl-4-methyl glutamate (HMG) by the condensation domain of the cghG NRPS module. One unique structural feature of Sch210972 is the tetramic acid motif proposed to be derived from the non-proteinogenic amino acid HMG, by a Dieckmann-type condensation catalyzed by the reductase domain of cghG. The aldolase cghB catalyzes the aldol condensation of 2 molecules of pyruvic acid to yield the intermediate 4-hydroxyl-4-methyl-2-oxoglutarate (HMOG), which can then be stereoselectively transaminated by an unidentified enzyme to form HMG. The Diels-Alderase cghA then uses the Dieckmann product released by cghG as substrate and catalyzes the Diels-Alder cycloaddition to form the decalin ring of Sch210972. CghA also suppresses the nonenzymatic formation of the alternative stereoisomer. The sequence is that of 4-hydroxy-4-methyl-2-oxoglutarate aldolase cghB from Chaetomium globosum (strain ATCC 6205 / CBS 148.51 / DSM 1962 / NBRC 6347 / NRRL 1970) (Soil fungus).